Here is a 184-residue protein sequence, read N- to C-terminus: UPF0397 protein SAB2561c (184 aa).

Transmembrane regions (helical) follow at residues 11 to 31, 44 to 64, 77 to 97, 111 to 131, and 148 to 168; these read VVAI…VVIP, AFLA…TGLV, AWWS…WIGL, MIYF…LIAP, and QGVI…TILL.

It belongs to the UPF0397 family.

It localises to the cell membrane. In Staphylococcus aureus (strain bovine RF122 / ET3-1), this protein is UPF0397 protein SAB2561c.